Reading from the N-terminus, the 280-residue chain is Large ribosomal subunit protein uL2 (280 aa).

Disordered regions lie at residues 1–58 and 226–280; these read MAIR…GGGH and MNPV…KHGR. Basic residues-rich tracts occupy residues 37–58 and 268–280; these read LHGH…GGGH and IVRR…KHGR.

The protein belongs to the universal ribosomal protein uL2 family. Part of the 50S ribosomal subunit. Forms a bridge to the 30S subunit in the 70S ribosome.

In terms of biological role, one of the primary rRNA binding proteins. Required for association of the 30S and 50S subunits to form the 70S ribosome, for tRNA binding and peptide bond formation. It has been suggested to have peptidyltransferase activity; this is somewhat controversial. Makes several contacts with the 16S rRNA in the 70S ribosome. The sequence is that of Large ribosomal subunit protein uL2 from Mycolicibacterium paratuberculosis (strain ATCC BAA-968 / K-10) (Mycobacterium paratuberculosis).